A 140-amino-acid chain; its full sequence is Large ribosomal subunit protein uL11 (140 aa).

This sequence belongs to the universal ribosomal protein uL11 family. As to quaternary structure, part of the ribosomal stalk of the 50S ribosomal subunit. Interacts with L10 and the large rRNA to form the base of the stalk. L10 forms an elongated spine to which L12 dimers bind in a sequential fashion forming a multimeric L10(L12)X complex. One or more lysine residues are methylated.

Its function is as follows. Forms part of the ribosomal stalk which helps the ribosome interact with GTP-bound translation factors. The chain is Large ribosomal subunit protein uL11 from Syntrophotalea carbinolica (strain DSM 2380 / NBRC 103641 / GraBd1) (Pelobacter carbinolicus).